A 411-amino-acid chain; its full sequence is Serine hydroxymethyltransferase (411 aa).

Residues Leu-119 and 123-125 (GHL) contribute to the (6S)-5,6,7,8-tetrahydrofolate site. Lys-228 carries the post-translational modification N6-(pyridoxal phosphate)lysine. 351–353 (SPF) contributes to the (6S)-5,6,7,8-tetrahydrofolate binding site.

This sequence belongs to the SHMT family. In terms of assembly, homodimer. Requires pyridoxal 5'-phosphate as cofactor.

Its subcellular location is the cytoplasm. The enzyme catalyses (6R)-5,10-methylene-5,6,7,8-tetrahydrofolate + glycine + H2O = (6S)-5,6,7,8-tetrahydrofolate + L-serine. It functions in the pathway one-carbon metabolism; tetrahydrofolate interconversion. Its pathway is amino-acid biosynthesis; glycine biosynthesis; glycine from L-serine: step 1/1. In terms of biological role, catalyzes the reversible interconversion of serine and glycine with tetrahydrofolate (THF) serving as the one-carbon carrier. This reaction serves as the major source of one-carbon groups required for the biosynthesis of purines, thymidylate, methionine, and other important biomolecules. Also exhibits THF-independent aldolase activity toward beta-hydroxyamino acids, producing glycine and aldehydes, via a retro-aldol mechanism. The chain is Serine hydroxymethyltransferase from Clostridium beijerinckii (strain ATCC 51743 / NCIMB 8052) (Clostridium acetobutylicum).